A 333-amino-acid polypeptide reads, in one-letter code: Large ribosomal subunit protein mL44 (333 aa).

A mitochondrion-targeting transit peptide spans 1–30; the sequence is MASAVFRLLQQGPRRLLAPAVPTLAPPVRG. Residues 86–228 enclose the RNase III domain; the sequence is DLLKTAFINS…LITQMTGKEL (143 aa). One can recognise a DRBM domain in the interval 236–306; it reads NPMGLLVEEL…ARVALRKLYG (71 aa). Positions 311 to 327 are enriched in basic and acidic residues; it reads RRPWDYSKPKESPKRAE. The disordered stretch occupies residues 311-333; sequence RRPWDYSKPKESPKRAEQTSVAS.

Belongs to the ribonuclease III family. Mitochondrion-specific ribosomal protein mL44 subfamily. As to quaternary structure, component of the mitochondrial ribosome large subunit (39S) which comprises a 16S rRNA and about 50 distinct proteins.

The protein localises to the mitochondrion. Its function is as follows. Component of the 39S subunit of mitochondrial ribosome. May have a function in the assembly/stability of nascent mitochondrial polypeptides exiting the ribosome. The sequence is that of Large ribosomal subunit protein mL44 (Mrpl44) from Mus musculus (Mouse).